Reading from the N-terminus, the 243-residue chain is HTH-type transcriptional repressor NagR (243 aa).

The HTH gntR-type domain maps to 9–77; that stretch reads IPIYYQIMEQ…KGRGTFVSKP (69 aa). Positions 37 to 56 form a DNA-binding region, H-T-H motif; the sequence is EREYAEQFGISRMTVRQALS. Alpha-D-glucosamine 6-phosphate-binding positions include 89 to 90, 133 to 135, Glu-145, 165 to 167, Glu-222, and Tyr-228; these read FT, RVR, and SIY. N-acetyl-D-glucosamine 6-phosphate is bound by residues 89–90, 133–135, Glu-145, 165–167, Glu-222, and Tyr-228; these read FT, RVR, and SIY.

In terms of assembly, homodimer. Forms dimers via the C-terminal effector-binding domain. At high concentrations, probably forms polymers along the DNA.

With respect to regulation, binding to DNA is allosterically inhibited by an effector molecule. Binding of the effector to the C-terminal domain leads to a conformational change that modulates binding to DNA and thereby regulates transcription of the target genes. Glucosamine-6-phosphate (GlcN6P) and/or N-acetylglucosamine-6-phosphate (GlcNAc6P) are putative effectors of NagR. Binding of GlcNAc6P may prevent the protein-protein interactions responsible for polymerization along the DNA, but not the specific DNA binding. Main transcriptional repressor of genes involved in N-acetylglucosamine (GlcNAc) transport and utilization. Represses the expression of the nagAB and nagP operons by binding directly within their upstream regions. Binds to the DNA consensus sequence 5'-ATTGGTATAGACAACT-3'. Also acts as a weak repressor of mapB expression. The sequence is that of HTH-type transcriptional repressor NagR from Bacillus subtilis (strain 168).